The chain runs to 117 residues: Small ribosomal subunit protein bS6 (117 aa).

This sequence belongs to the bacterial ribosomal protein bS6 family.

Binds together with bS18 to 16S ribosomal RNA. This chain is Small ribosomal subunit protein bS6, found in Trichodesmium erythraeum (strain IMS101).